We begin with the raw amino-acid sequence, 470 residues long: FAD-dependent monooxygenase SAT7 (470 aa).

The helical transmembrane segment at 28–48 threads the bilayer; sequence GLSVAIVGGGIVGIALALGLV. 3 residues coordinate FAD: Glu-58, Ala-71, and Arg-143. Residues Arg-227 and Tyr-260 contribute to the active site. The FAD site is built by Asp-351 and Ala-364.

The protein belongs to the paxM FAD-dependent monooxygenase family. It depends on FAD as a cofactor.

It is found in the membrane. Its pathway is mycotoxin biosynthesis. Its function is as follows. FAD-dependent monooxygenase; part of the satratoxin SC1 cluster involved in the biosynthesis of satratoxins, trichothecene mycotoxins that are associated with human food poisonings. Satratoxins are suggested to be made by products of multiple gene clusters (SC1, SC2 and SC3) that encode 21 proteins in all, including polyketide synthases, acetyltransferases, and other enzymes expected to modify the trichothecene skeleton. SC1 encodes 10 proteins, SAT1 to SAT10. The largest are SAT8, which encodes a putative polyketide synthase (PKS) with a conventional non-reducing architecture, and SAT10, a putative protein containing four ankyrin repeats and thus may be involved in protein scaffolding. The putative short-chain reductase SAT3 may assist the PKS in some capacity. SAT6 contains a secretory lipase domain and acts probably as a trichothecene esterase. SAT5 encodes a putative acetyltransferase, and so, with SAT6, may affect endogenous protection from toxicity. The probable transcription factor SAT9 may regulate the expression of the SC1 cluster. SC2 encodes proteins SAT11 to SAT16, the largest of which encodes the putative reducing PKS SAT13. SAT11 is a cytochrome P450 monooxygenase, while SAT14 and SAT16 are probable acetyltransferases. The SC2 cluster may be regulated by the transcription factor SAT15. SC3 is a small cluster that encodes 5 proteins, SAT17 to SAT21. SAT21 is a putative MFS-type transporter which may have a role in exporting secondary metabolites. The four other proteins putatively encoded in SC3 include the taurine hydroxylase-like protein SAT17, the O-methyltransferase SAT18, the acetyltransferase SAT19, and the Cys6-type zinc finger SAT20, the latter being probably involved in regulation of SC3 expression. The protein is FAD-dependent monooxygenase SAT7 of Stachybotrys chartarum (strain CBS 109288 / IBT 7711) (Toxic black mold).